The following is a 287-amino-acid chain: Short-chain dehydrogenase virD (287 aa).

Residues V10, T36, D57, N85, Y149, K153, V182, and T184 each coordinate NADP(+). Y149 serves as the catalytic Proton acceptor. Catalysis depends on K153, which acts as the Lowers pKa of active site Tyr.

Belongs to the short-chain dehydrogenases/reductases (SDR) family.

The protein operates within secondary metabolite biosynthesis. In terms of biological role, short-chain dehydrogenase; part of the gene cluster that mediates the biosynthesis of virensols and trichoxide, fungal natural products that contain or are derived from a salicylaldehyde core. The pathway begins with the synthesis of the reduced chain in virensol C by the highly reducing polyketide synthase virA via condensation of one acetate and 8 malonate units. VirA has interesting programming rules since the first 2 ketides are fully reduced, the 3 following ketides undergo beta-dehydration, and the last 3 ketides are only reduced to beta-hydroxys to yield the trihydroxy portion. The production of aldehyde virensol C by virA alone is surprising, since virA does not contain a reductase (R) domain that is typically associated with reductive product release in HRPKS. The cupin-domain enzyme virC is involved in enhancing virA product turnover. The short-chain dehydrogenase virB then oxidizes the C-7 alcohol of virensol C to a ketone, yielding virensol D. Virensol D is further transformed to salicylaldehyde 5-deoxyaurocitrin by the short-chain dehydrogenase virD. VirD catalyzes the dehydrogenation of C-3 to form the beta-ketone aldehyde, which is followed by the generation of the nucleophilic C-2 that is required for the intramolecular aldol condensation between C-2 and C-7, itself followed by dehydration and aromatization which leads to salicylaldehyde 5-deoxyaurocitrin. While the dehydrogenation of virensol D is definitely catalyzed by virD, the aldol condensation and dehydration may be uncatalyzed or assisted by virD. The short chain dehydrogenase virG then converts salicylaldehyde 5-deoxyaurocitrin into virensol B which is further hydroxylated by the cytochrome P450 monooxygenase virE to yield the hydroquinone virensol A. VirI then may oxidize virensol A to form the quinone, while virH performs the epoxidation. Finally, the two remaining short-chain dehydrogenases, virK and virL, are probably responsible for reducing the ketones to the corresponding alcohols to furnish the epoxycyclohexanol structure in trichoxide. The polypeptide is Short-chain dehydrogenase virD (Hypocrea virens (strain Gv29-8 / FGSC 10586) (Gliocladium virens)).